A 549-amino-acid polypeptide reads, in one-letter code: Glucose-6-phosphate isomerase (549 aa).

K80, K228, and K234 each carry N6-acetyllysine. The active-site Proton donor is the E355. Catalysis depends on residues H386 and K514.

It belongs to the GPI family.

Its subcellular location is the cytoplasm. The catalysed reaction is alpha-D-glucose 6-phosphate = beta-D-fructose 6-phosphate. Its pathway is carbohydrate biosynthesis; gluconeogenesis. It participates in carbohydrate degradation; glycolysis; D-glyceraldehyde 3-phosphate and glycerone phosphate from D-glucose: step 2/4. Catalyzes the reversible isomerization of glucose-6-phosphate to fructose-6-phosphate. This chain is Glucose-6-phosphate isomerase, found in Escherichia coli (strain SE11).